We begin with the raw amino-acid sequence, 181 residues long: MSILSLITAPDPILKKVASPVDTVNDSIRQLMDDMLETMYHNHGVGLAAPQVAVSKRIIVLDLSKVDIKEDNITNSEYKYPLFMVNPIVKAISNQTATAKEGCLSLPKQAIEVSRYHEIQVTYLDYYNKLTTLNAEGWLARAIQHEVDHLDGILLVDYLSNLKKEAALNTLSKIKDAAYDK.

2 residues coordinate Fe cation: Cys103 and His145. Residue Glu146 is part of the active site. His149 lines the Fe cation pocket.

This sequence belongs to the polypeptide deformylase family. Fe(2+) serves as cofactor.

The enzyme catalyses N-terminal N-formyl-L-methionyl-[peptide] + H2O = N-terminal L-methionyl-[peptide] + formate. Removes the formyl group from the N-terminal Met of newly synthesized proteins. Requires at least a dipeptide for an efficient rate of reaction. N-terminal L-methionine is a prerequisite for activity but the enzyme has broad specificity at other positions. In Orientia tsutsugamushi (strain Ikeda) (Rickettsia tsutsugamushi), this protein is Peptide deformylase.